We begin with the raw amino-acid sequence, 334 residues long: 3-ketodihydrosphingosine reductase (334 aa).

The signal sequence occupies residues 1-20 (MIIYILFSLLAAVIVHLVYK). NADPH-binding residues include G36, S38, S39, G40, R62, K66, D100, and I101. The GXSXG signature appears at 36-40 (GGSSG). Residue S182 is the Proton donor of the active site. Residue Y196 is the Proton acceptor of the active site. The NADP(+) site is built by Y196 and K200. K200 serves as the catalytic Lowers pKa of active site Tyr.

This sequence belongs to the short-chain dehydrogenases/reductases (SDR) family.

The protein localises to the endoplasmic reticulum. The enzyme catalyses sphinganine + NADP(+) = 3-oxosphinganine + NADPH + H(+). Its pathway is lipid metabolism; sphingolipid metabolism. Catalyzes the reduction of 3'-oxosphinganine (3-ketodihydrosphingosine/KDS) to sphinganine (dihydrosphingosine/DHS), the second step of de novo sphingolipid biosynthesis. The protein is 3-ketodihydrosphingosine reductase (ksrA-1) of Dictyostelium discoideum (Social amoeba).